The following is a 194-amino-acid chain: Peptidyl-tRNA hydrolase (194 aa).

Tyrosine 17 provides a ligand contact to tRNA. Histidine 22 functions as the Proton acceptor in the catalytic mechanism. Tyrosine 69, asparagine 71, and asparagine 117 together coordinate tRNA.

Belongs to the PTH family. Monomer.

The protein localises to the cytoplasm. The catalysed reaction is an N-acyl-L-alpha-aminoacyl-tRNA + H2O = an N-acyl-L-amino acid + a tRNA + H(+). In terms of biological role, hydrolyzes ribosome-free peptidyl-tRNAs (with 1 or more amino acids incorporated), which drop off the ribosome during protein synthesis, or as a result of ribosome stalling. Its function is as follows. Catalyzes the release of premature peptidyl moieties from peptidyl-tRNA molecules trapped in stalled 50S ribosomal subunits, and thus maintains levels of free tRNAs and 50S ribosomes. This chain is Peptidyl-tRNA hydrolase, found in Paenarthrobacter aurescens (strain TC1).